The sequence spans 248 residues: Pulmonary surfactant-associated protein A (248 aa).

The signal sequence occupies residues 1-17 (MLLCSLTLMLLWMVASG). The region spanning 28 to 100 (GSPGIPGTPG…PGERGPPGFP (73 aa)) is the Collagen-like domain. Positions 29–103 (SPGIPGTPGS…RGPPGFPAYL (75 aa)) are disordered. The segment covering 42–51 (PGRDGRDGIK) has biased composition (basic and acidic residues). A compositionally biased stretch (pro residues) spans 54–65 (PGPPGPMGPPGG). Residues 69 to 82 (LPGRDGMTGAPGLP) show a composition bias toward low complexity. Residues 84 to 93 (ERGEKGEPGE) are compositionally biased toward basic and acidic residues. One can recognise a C-type lectin domain in the interval 127–247 (LQGSMLEVGE…CLQYRLAICE (121 aa)). 2 cysteine pairs are disulfide-bonded: C155/C246 and C224/C238. N207 carries N-linked (GlcNAc...) asparagine glycosylation. Positions 215, 217, 234, and 235 each coordinate Ca(2+).

This sequence belongs to the SFTPA family. In terms of assembly, oligomeric complex of 6 set of homotrimers.

The protein localises to the secreted. It is found in the extracellular space. Its subcellular location is the extracellular matrix. The protein resides in the surface film. Its function is as follows. In presence of calcium ions, it binds to surfactant phospholipids and contributes to lower the surface tension at the air-liquid interface in the alveoli of the mammalian lung and is essential for normal respiration. Enhances the expression of MYO18A/SP-R210 on alveolar macrophages. The chain is Pulmonary surfactant-associated protein A (SFTPA1) from Ovis aries (Sheep).